Consider the following 141-residue polypeptide: Nucleoside diphosphate kinase (141 aa).

The ATP site is built by K11, F59, R87, T93, R104, and N114. H117 (pros-phosphohistidine intermediate) is an active-site residue.

Belongs to the NDK family. In terms of assembly, homotetramer. Requires Mg(2+) as cofactor.

The protein localises to the cytoplasm. It carries out the reaction a 2'-deoxyribonucleoside 5'-diphosphate + ATP = a 2'-deoxyribonucleoside 5'-triphosphate + ADP. The enzyme catalyses a ribonucleoside 5'-diphosphate + ATP = a ribonucleoside 5'-triphosphate + ADP. In terms of biological role, major role in the synthesis of nucleoside triphosphates other than ATP. The ATP gamma phosphate is transferred to the NDP beta phosphate via a ping-pong mechanism, using a phosphorylated active-site intermediate. This Burkholderia cenocepacia (strain HI2424) protein is Nucleoside diphosphate kinase.